The chain runs to 226 residues: MLSMFMCNNIVDYVDDIDNGIVQDIEDEASNNVDHDYVYPLPENMVYRFDKSTNILDYLSTERDHVMMAVRYYMSKQRLDDLYRQLPTKTRSYIDIINIYCDKVSNDYNRDMNIMYDMASTKSFTVYDINNEVNTILMDNKGLGVRLATISFITELGRRCMNPVKTIKMFTLLSHTICDDCFVDYITDISPPDNTIPNTSTREYLKLIGITAIMFATYKTLKYMIG.

Belongs to the orthopoxvirus OPG045 family. Homodimer. Interacts with host pro-apoptotic protein BCL2L11 (via BH3 domain). Interacts with host NLRP1. Interacts with host BAK.

It is found in the host mitochondrion outer membrane. It localises to the host cytoplasm. Plays a role in evading host innate immune response by inhibiting host inflammasome activation. Interacts with and inhibits NLR-mediated interleukin-1 beta/IL1B production in infected cells. At the host mitochondria outer membrane, interacts with the BH3 domain of host BAK and prevents BAK from binding active BAX. In turn, host apoptosis is inhibited. In Vaccinia virus (strain Copenhagen) (VACV), this protein is Apoptosis regulator OPG045 (OPG045).